The sequence spans 490 residues: Cytochrome P450 71A25 (490 aa).

A helical transmembrane segment spans residues 1-21; that stretch reads MMMMIILLWSIIFMTILFLKK. Cys-431 serves as a coordination point for heme.

The protein belongs to the cytochrome P450 family. Heme serves as cofactor.

It is found in the membrane. This is Cytochrome P450 71A25 (CYP71A25) from Arabidopsis thaliana (Mouse-ear cress).